A 312-amino-acid chain; its full sequence is DNA-directed RNA polymerase subunit alpha (312 aa).

The segment at 1–229 is alpha N-terminal domain (alpha-NTD); the sequence is MLQYQIDRID…ELFQPLATVS (229 aa). The tract at residues 239 to 312 is alpha C-terminal domain (alpha-CTD); the sequence is EPAAEAQIPL…ISIPQSRTSA (74 aa).

Belongs to the RNA polymerase alpha chain family. As to quaternary structure, in cyanobacteria the RNAP catalytic core is composed of 2 alpha, 1 beta, 1 beta', 1 gamma and 1 omega subunit. When a sigma factor is associated with the core the holoenzyme is formed, which can initiate transcription.

The enzyme catalyses RNA(n) + a ribonucleoside 5'-triphosphate = RNA(n+1) + diphosphate. In terms of biological role, DNA-dependent RNA polymerase catalyzes the transcription of DNA into RNA using the four ribonucleoside triphosphates as substrates. In Prochlorococcus marinus (strain NATL1A), this protein is DNA-directed RNA polymerase subunit alpha.